A 339-amino-acid chain; its full sequence is DNA-directed RNA polymerase subunit alpha (339 aa).

An alpha N-terminal domain (alpha-NTD) region spans residues Met1–Glu235. The alpha C-terminal domain (alpha-CTD) stretch occupies residues Phe251 to Tyr339.

Belongs to the RNA polymerase alpha chain family. Homodimer. The RNAP catalytic core consists of 2 alpha, 1 beta, 1 beta' and 1 omega subunit. When a sigma factor is associated with the core the holoenzyme is formed, which can initiate transcription.

It carries out the reaction RNA(n) + a ribonucleoside 5'-triphosphate = RNA(n+1) + diphosphate. In terms of biological role, DNA-dependent RNA polymerase catalyzes the transcription of DNA into RNA using the four ribonucleoside triphosphates as substrates. The polypeptide is DNA-directed RNA polymerase subunit alpha (Rhodopseudomonas palustris (strain HaA2)).